We begin with the raw amino-acid sequence, 361 residues long: Mitochondrial import receptor subunit TOM40 homolog (361 aa).

The interval 1–73 (MGNVLAASSP…GAAAASEDGS (73 aa)) is disordered. Positions 11–36 (PAGPPPPPTPSLVGLPPPPPSPPGFT) are enriched in pro residues. A compositionally biased stretch (gly residues) spans 40-50 (LGGGLGTGSST). Over residues 51–69 (GRGSERTPGAAASGAAAAS) the composition is skewed to low complexity.

It belongs to the Tom40 family. Forms part of the preprotein translocase complex of the outer mitochondrial membrane (TOM complex) which consists of at least 7 different proteins (TOMM5, TOMM6, TOMM7, TOMM20, TOMM22, TOMM40 and TOMM70). Interacts with mitochondrial targeting sequences. Interacts with TIMM29; linking the TIM22 complex to the TOM complex. Forms a complex with BCAP31 (via C-terminus) which mediates the translocation of components of the mitochondrial membrane respiratory chain NADH dehydrogenase (Complex I) from the cytosol to the mitochondria. Interacts (via N-terminus) with CYP1A1 (via mitochondrial targeting signal); this interaction is required for CYP1A1 translocation across the mitochondrial outer membrane.

It localises to the mitochondrion outer membrane. In terms of biological role, channel-forming protein essential for import of protein precursors into mitochondria. Plays a role in the assembly of the mitochondrial membrane respiratory chain NADH dehydrogenase (Complex I) by forming a complex with BCAP31 and mediating the translocation of Complex I components from the cytosol to the mitochondria. This is Mitochondrial import receptor subunit TOM40 homolog (Tomm40) from Mus musculus (Mouse).